The following is a 100-amino-acid chain: Urease subunit gamma (100 aa).

The protein belongs to the urease gamma subunit family. Heterotrimer of UreA (gamma), UreB (beta) and UreC (alpha) subunits. Three heterotrimers associate to form the active enzyme.

The protein resides in the cytoplasm. It catalyses the reaction urea + 2 H2O + H(+) = hydrogencarbonate + 2 NH4(+). The protein operates within nitrogen metabolism; urea degradation; CO(2) and NH(3) from urea (urease route): step 1/1. This chain is Urease subunit gamma, found in Acinetobacter baumannii (strain AB307-0294).